A 901-amino-acid polypeptide reads, in one-letter code: HTH-type transcriptional regulator MalT (901 aa).

39 to 46 is a binding site for ATP; that stretch reads SPAGYGKT. The HTH luxR-type domain maps to 829–894; sequence ELIRTSPLTQ…AAVQHAQKLL (66 aa). The H-T-H motif DNA-binding region spans 853–872; the sequence is NEQIAGELEVAATTIKTHIR.

This sequence belongs to the MalT family. As to quaternary structure, monomer in solution. Oligomerizes to an active state in the presence of the positive effectors ATP and maltotriose.

With respect to regulation, activated by ATP and maltotriose, which are both required for DNA binding. Functionally, positively regulates the transcription of the maltose regulon whose gene products are responsible for uptake and catabolism of malto-oligosaccharides. Specifically binds to the promoter region of its target genes, recognizing a short DNA motif called the MalT box. This Shigella boydii serotype 4 (strain Sb227) protein is HTH-type transcriptional regulator MalT.